We begin with the raw amino-acid sequence, 278 residues long: HTH-type transcriptional regulator HdfR (278 aa).

The HTH lysR-type domain occupies 1-58; the sequence is MDTELLKTFLEVSRTRHFGRAAEALYLTQSAVSFRIRQLENQLGVNLFTRHRNNIRLT. The H-T-H motif DNA-binding region spans 18–37; the sequence is FGRAAEALYLTQSAVSFRIR.

This sequence belongs to the LysR transcriptional regulatory family.

Functionally, negatively regulates the transcription of the flagellar master operon flhDC by binding to the upstream region of the operon. The sequence is that of HTH-type transcriptional regulator HdfR from Salmonella newport (strain SL254).